A 248-amino-acid polypeptide reads, in one-letter code: Large ribosomal subunit protein bL9m (248 aa).

Residues 1 to 25 constitute a mitochondrion transit peptide; the sequence is MLKNIYVTPLNLLKSATSLQQQVRT.

The protein belongs to the bacterial ribosomal protein bL9 family. Component of the mitochondrial ribosome large subunit (39S) which comprises a 16S rRNA and about 50 distinct proteins.

The protein localises to the mitochondrion. This Drosophila melanogaster (Fruit fly) protein is Large ribosomal subunit protein bL9m (mRpL9).